The following is a 155-amino-acid chain: 6,7-dimethyl-8-ribityllumazine synthase (155 aa).

Residues F23, 57–59 (AFE), and 81–83 (AVI) contribute to the 5-amino-6-(D-ribitylamino)uracil site. 86-87 (ST) serves as a coordination point for (2S)-2-hydroxy-3-oxobutyl phosphate. Catalysis depends on H89, which acts as the Proton donor. F114 lines the 5-amino-6-(D-ribitylamino)uracil pocket. (2S)-2-hydroxy-3-oxobutyl phosphate is bound at residue R128.

This sequence belongs to the DMRL synthase family.

The catalysed reaction is (2S)-2-hydroxy-3-oxobutyl phosphate + 5-amino-6-(D-ribitylamino)uracil = 6,7-dimethyl-8-(1-D-ribityl)lumazine + phosphate + 2 H2O + H(+). Its pathway is cofactor biosynthesis; riboflavin biosynthesis; riboflavin from 2-hydroxy-3-oxobutyl phosphate and 5-amino-6-(D-ribitylamino)uracil: step 1/2. Catalyzes the formation of 6,7-dimethyl-8-ribityllumazine by condensation of 5-amino-6-(D-ribitylamino)uracil with 3,4-dihydroxy-2-butanone 4-phosphate. This is the penultimate step in the biosynthesis of riboflavin. The protein is 6,7-dimethyl-8-ribityllumazine synthase of Pelobacter propionicus (strain DSM 2379 / NBRC 103807 / OttBd1).